Consider the following 1210-residue polypeptide: Epidermal growth factor receptor (1210 aa).

The first 24 residues, 1 to 24 (MRPSGTAGAALLALLAALCPASRA), serve as a signal peptide directing secretion. Residues 25-645 (LEEKKVCQGT…CARNGPKIPS (621 aa)) lie on the Extracellular side of the membrane. Cys31 and Cys58 form a disulfide bridge. The Approximate repeat unit spans residues 75 to 300 (DLSFLKTIQE…CVKKCPRNYV (226 aa)). N-linked (GlcNAc...) asparagine glycans are attached at residues Asn128, Asn175, and Asn196. Intrachain disulfides connect Cys157-Cys187, Cys190-Cys199, Cys194-Cys207, Cys215-Cys223, Cys219-Cys231, Cys232-Cys240, Cys236-Cys248, Cys251-Cys260, Cys264-Cys291, Cys295-Cys307, Cys311-Cys326, Cys329-Cys333, and Cys337-Cys362. Ser229 bears the Phosphoserine mark. Residues Asn352, Asn361, Asn413, and Asn444 are each glycosylated (N-linked (GlcNAc...) asparagine). The stretch at 390-600 (QELDILKTVK…CVKTCPAGVM (211 aa)) is one Approximate repeat. Disulfide bonds link Cys470–Cys499, Cys506–Cys515, Cys510–Cys523, Cys526–Cys535, Cys539–Cys555, Cys558–Cys571, Cys562–Cys579, Cys582–Cys591, Cys595–Cys617, Cys620–Cys628, and Cys624–Cys636. Residue Asn528 is glycosylated (N-linked (GlcNAc...) asparagine). N-linked (GlcNAc...) asparagine glycosylation occurs at Asn568. A glycan (N-linked (GlcNAc...) asparagine) is linked at Asn603. The chain crosses the membrane as a helical span at residues 646 to 668 (IATGMVGALLLLLVVALGIGLFM). The Cytoplasmic segment spans residues 669–1210 (RRRHIVRKRT…APQSSEFIGA (542 aa)). Phosphothreonine; by PKC and PKD/PRKD1 is present on Thr678. Residues 688-704 (LVEPLTPSGEAPNQALL) are important for dimerization, phosphorylation and activation. A Phosphothreonine; by PKD/PRKD1 modification is found at Thr693. A Phosphoserine modification is found at Ser695. Residues 712 to 979 (FKKIKVLGSG…KMARDPQRYL (268 aa)) enclose the Protein kinase domain. Residue Lys716 forms a Glycyl lysine isopeptide (Lys-Gly) (interchain with G-Cter in ubiquitin) linkage. 718–726 (LGSGAFGTV) lines the ATP pocket. Residue Lys737 forms a Glycyl lysine isopeptide (Lys-Gly) (interchain with G-Cter in ubiquitin) linkage. Position 745 (Lys745) interacts with ATP. An N6-(2-hydroxyisobutyryl)lysine modification is found at Lys745. Glycyl lysine isopeptide (Lys-Gly) (interchain with G-Cter in ubiquitin) cross-links involve residues Lys754 and Lys757. 790 to 791 (TQ) contributes to the ATP binding site. The active-site Proton acceptor is Asp837. ATP is bound at residue Asp855. Residue Lys867 forms a Glycyl lysine isopeptide (Lys-Gly) (interchain with G-Cter in ubiquitin) linkage. Phosphotyrosine is present on Tyr869. Glycyl lysine isopeptide (Lys-Gly) (interchain with G-Cter in ubiquitin) cross-links involve residues Lys929, Lys960, and Lys970. Ser991 and Ser995 each carry phosphoserine. 2 positions are modified to phosphotyrosine; by autocatalysis: Tyr998 and Tyr1016. 2 positions are modified to phosphoserine: Ser1026 and Ser1039. A Phosphothreonine modification is found at Thr1041. Ser1042 bears the Phosphoserine mark. Cys1049 carries the S-palmitoyl cysteine lipid modification. Ser1064 carries the phosphoserine modification. Phosphotyrosine is present on Tyr1069. A phosphoserine mark is found at Ser1070, Ser1071, and Ser1081. 2 positions are modified to phosphotyrosine; by autocatalysis: Tyr1092 and Tyr1110. Residues 1097-1137 (VPKRPAGSVQNPVYHNQPLNPAPSRDPHYQDPHSTAVGNPE) form a disordered region. Composition is skewed to polar residues over residues 1104–1115 (SVQNPVYHNQPL) and 1128–1137 (PHSTAVGNPE). Residue Cys1146 is the site of S-palmitoyl cysteine attachment. Phosphoserine is present on Ser1166. Phosphotyrosine; by autocatalysis occurs at positions 1172 and 1197. The residue at position 1199 (Arg1199) is an Omega-N-methylarginine.

The protein belongs to the protein kinase superfamily. Tyr protein kinase family. EGF receptor subfamily. Binding of the ligand triggers homo- and/or heterodimerization of the receptor triggering its autophosphorylation. Heterodimer with ERBB2. Forms a complex with CCDC88A/GIV (via SH2-like regions) and GNAI3 which leads to enhanced EGFR signaling and triggering of cell migration; binding to CCDC88A requires autophosphorylation of the EGFR C-terminal region, and ligand stimulation is required for recruitment of GNAI3 to the complex. Interacts with ERRFI1; inhibits dimerization of the kinase domain and autophosphorylation. Part of a complex with ERBB2 and either PIK3C2A or PIK3C2B. Interacts with GRB2; an adapter protein coupling the receptor to downstream signaling pathways. Interacts with GAB2; involved in signaling downstream of EGFR. Interacts with STAT3; mediates EGFR downstream signaling in cell proliferation. Interacts with RIPK1; involved in NF-kappa-B activation. Interacts (autophosphorylated) with CBL, CBLB and CBLC; involved in EGFR ubiquitination and regulation; interaction with CBL is reduced in the presence of tensin TNS4. Interacts with SOCS5; regulates EGFR degradation through ELOC- and ELOB-mediated ubiquitination and proteasomal degradation. Interacts with PRMT5; methylates EGFR and enhances interaction with PTPN6. Interacts (phosphorylated) with PTPN6; inhibits EGFR-dependent activation of MAPK/ERK. Interacts with COPG1; essential for regulation of EGF-dependent nuclear transport of EGFR by retrograde trafficking from the Golgi to the ER. Interacts with TNK2; this interaction is dependent on EGF stimulation and kinase activity of EGFR. Interacts with PCNA; positively regulates PCNA. Interacts with PELP1. Interacts with MUC1. Interacts with AP2M1. Interacts with FER. May interact with EPS8; mediates EPS8 phosphorylation. Interacts (via SH2 domains) with GRB2, NCK1 and NCK2. Interacts with ATXN2. Interacts with GAREM1. Interacts (ubiquitinated) with ANKRD13A/B/D; the interaction is direct and may regulate EGFR internalization after EGF stimulation. Interacts with GPER1; the interaction occurs in an estrogen-dependent manner. Interacts (via C-terminal cytoplasmic kinase domain) with ZPR1 (via zinc fingers). Interacts with RNF115 and RNF126. Interacts with GPRC5A (via its transmembrane domain). Interacts with FAM83B; positively regulates EGFR inducing its autophosphorylation in absence of stimulation by EGF. Interacts with LAPTM4B; positively correlates with EGFR activation. Interacts with STX19. Interacts with CD44. Interacts with PGRMC1; the interaction requires PGRMC1 homodimerization. Interacts with PIKFYVE. Interacts with NEU3. Interacts with TRAF4. Interacts with the ant venom OMEGA-myrmeciitoxin(02)-Mg1a. Interacts with CD82; this interaction facilitates ligand-induced endocytosis of the receptor and its subsequent desensitization. In terms of processing, phosphorylated on Tyr residues in response to EGF. Phosphorylation at Ser-695 is partial and occurs only if Thr-693 is phosphorylated. Phosphorylation at Thr-678 and Thr-693 by PRKD1 inhibits EGF-induced MAPK8/JNK1 activation. Dephosphorylation by PTPRJ prevents endocytosis and stabilizes the receptor at the plasma membrane. Autophosphorylation at Tyr-1197 is stimulated by methylation at Arg-1199 and enhances interaction with PTPN6. Autophosphorylation at Tyr-1092 and/or Tyr-1110 recruits STAT3. Dephosphorylated by PTPN1 and PTPN2. Post-translationally, monoubiquitinated and polyubiquitinated upon EGF stimulation; which does not affect tyrosine kinase activity or signaling capacity but may play a role in lysosomal targeting. Polyubiquitin linkage is mainly through 'Lys-63', but linkage through 'Lys-48', 'Lys-11' and 'Lys-29' also occurs. Deubiquitination by OTUD7B prevents degradation. Ubiquitinated by RNF115 and RNF126. Ubiquitinated by ZNRF1 or CBL at different lysines in response to EGF stimulation; leading to recruitment of the ESCRT machinery and subsequent degradation in the lysosomes. Deubiquitinated by UCHL1 leading to the inhibition of its degradation. Palmitoylated on Cys residues by ZDHHC20. Palmitoylation inhibits internalization after ligand binding, and increases the persistence of tyrosine-phosphorylated EGFR at the cell membrane. Palmitoylation increases the amplitude and duration of EGFR signaling. In terms of processing, methylated. Methylation at Arg-1199 by PRMT5 stimulates phosphorylation at Tyr-1197. In terms of tissue distribution, hypothalamus.

It is found in the cell membrane. Its subcellular location is the endoplasmic reticulum membrane. It localises to the golgi apparatus membrane. The protein resides in the nucleus membrane. The protein localises to the endosome. It is found in the endosome membrane. Its subcellular location is the nucleus. It carries out the reaction L-tyrosyl-[protein] + ATP = O-phospho-L-tyrosyl-[protein] + ADP + H(+). Endocytosis and inhibition of the activated EGFR by phosphatases like PTPRJ and PTPRK constitute immediate regulatory mechanisms. Upon EGF-binding phosphorylates EPS15 that regulates EGFR endocytosis and activity. Moreover, inducible feedback inhibitors including LRIG1, SOCS4, SOCS5 and ERRFI1 constitute alternative regulatory mechanisms for the EGFR signaling. Its function is as follows. Receptor tyrosine kinase binding ligands of the EGF family and activating several signaling cascades to convert extracellular cues into appropriate cellular responses. Known ligands include EGF, TGFA/TGF-alpha, AREG, epigen/EPGN, BTC/betacellulin, epiregulin/EREG and HBEGF/heparin-binding EGF. Ligand binding triggers receptor homo- and/or heterodimerization and autophosphorylation on key cytoplasmic residues. The phosphorylated receptor recruits adapter proteins like GRB2 which in turn activates complex downstream signaling cascades. Activates at least 4 major downstream signaling cascades including the RAS-RAF-MEK-ERK, PI3 kinase-AKT, PLCgamma-PKC and STATs modules. May also activate the NF-kappa-B signaling cascade. Also directly phosphorylates other proteins like RGS16, activating its GTPase activity and probably coupling the EGF receptor signaling to the G protein-coupled receptor signaling. Also phosphorylates MUC1 and increases its interaction with SRC and CTNNB1/beta-catenin. Positively regulates cell migration via interaction with CCDC88A/GIV which retains EGFR at the cell membrane following ligand stimulation, promoting EGFR signaling which triggers cell migration. Plays a role in enhancing learning and memory performance. Plays a role in mammalian pain signaling (long-lasting hypersensitivity). This chain is Epidermal growth factor receptor (EGFR), found in Macaca mulatta (Rhesus macaque).